Consider the following 348-residue polypeptide: Nuclear receptor subfamily 1 group I member 3 (348 aa).

The segment at residues 8–83 is a DNA-binding region (nuclear receptor); that stretch reads LRNCVVCGDQ…AGMRKDMILS (76 aa). An NR C4-type zinc finger spans residues 11 to 31; the sequence is CVVCGDQATGYHFNALTCEGC. T38 bears the Phosphothreonine; by PKC mark. The segment at 47–71 adopts an NR C4-type zinc-finger fold; it reads CPFAGSCEVSKTQRRHCPACRLQKC. Residues 109-348 enclose the NR LBD domain; sequence EQEELIRTLL…MMPLLQEICS (240 aa).

The protein belongs to the nuclear hormone receptor family. NR1 subfamily. Heterodimer of NR1I3 and RXR. Interacts with PSMC4. Interacts with ECT2. Directly interacts with DNAJC7; this complex may also include HSP90. Interacts with CRY1. Interacts with CRY2 in a ligand-dependent manner. In terms of processing, phosphorylated at Thr-38 by PKC, dephosphorylation of Thr-38 is required for nuclear translocation and activation.

Its subcellular location is the nucleus. The protein resides in the cytoplasm. The protein localises to the cytoskeleton. In terms of biological role, binds and transactivates the retinoic acid response elements that control expression of the retinoic acid receptor beta 2 and alcohol dehydrogenase 3 genes. Transactivates both the phenobarbital responsive element module of the human CYP2B6 gene and the CYP3A4 xenobiotic response element. In Pan troglodytes (Chimpanzee), this protein is Nuclear receptor subfamily 1 group I member 3 (NR1I3).